Consider the following 187-residue polypeptide: Acireductone dioxygenase (187 aa).

His-90, His-92, Glu-96, and His-135 together coordinate Fe(2+). 4 residues coordinate Ni(2+): His-90, His-92, Glu-96, and His-135.

It belongs to the acireductone dioxygenase (ARD) family. Fe(2+) serves as cofactor. Requires Ni(2+) as cofactor.

It localises to the cytoplasm. The protein resides in the nucleus. It catalyses the reaction 1,2-dihydroxy-5-(methylsulfanyl)pent-1-en-3-one + O2 = 4-methylsulfanyl-2-oxobutanoate + formate + 2 H(+). It carries out the reaction 1,2-dihydroxy-5-(methylsulfanyl)pent-1-en-3-one + O2 = 3-(methylsulfanyl)propanoate + CO + formate + 2 H(+). The protein operates within amino-acid biosynthesis; L-methionine biosynthesis via salvage pathway; L-methionine from S-methyl-5-thio-alpha-D-ribose 1-phosphate: step 5/6. In terms of biological role, catalyzes 2 different reactions between oxygen and the acireductone 1,2-dihydroxy-3-keto-5-methylthiopentene (DHK-MTPene) depending upon the metal bound in the active site. Fe-containing acireductone dioxygenase (Fe-ARD) produces formate and 2-keto-4-methylthiobutyrate (KMTB), the alpha-ketoacid precursor of methionine in the methionine recycle pathway. Ni-containing acireductone dioxygenase (Ni-ARD) produces methylthiopropionate, carbon monoxide and formate, and does not lie on the methionine recycle pathway. This is Acireductone dioxygenase from Drosophila pseudoobscura pseudoobscura (Fruit fly).